The sequence spans 262 residues: Putative ankyrin repeat protein R848 (262 aa).

ANK repeat units follow at residues 8–37 (SNDY…NVTH), 38–67 (DNNY…DIRD), 68–97 (CRDY…NIRA), 99–127 (DDYA…NFRA), 128–157 (DNDY…DIRA), 159–187 (DDYA…DFRS), and 189–217 (NNAS…DVNT).

The polypeptide is Putative ankyrin repeat protein R848 (Acanthamoeba polyphaga (Amoeba)).